We begin with the raw amino-acid sequence, 288 residues long: Diaminopimelate epimerase (288 aa).

Asparagine 14 and asparagine 67 together coordinate substrate. Cysteine 76 functions as the Proton donor in the catalytic mechanism. Residues 77–78 (GN), asparagine 166, asparagine 199, and 217–218 (ER) each bind substrate. The active-site Proton acceptor is cysteine 226. 227–228 (GT) contributes to the substrate binding site.

It belongs to the diaminopimelate epimerase family. Homodimer.

It is found in the cytoplasm. It carries out the reaction (2S,6S)-2,6-diaminopimelate = meso-2,6-diaminopimelate. Its pathway is amino-acid biosynthesis; L-lysine biosynthesis via DAP pathway; DL-2,6-diaminopimelate from LL-2,6-diaminopimelate: step 1/1. In terms of biological role, catalyzes the stereoinversion of LL-2,6-diaminopimelate (L,L-DAP) to meso-diaminopimelate (meso-DAP), a precursor of L-lysine and an essential component of the bacterial peptidoglycan. The protein is Diaminopimelate epimerase of Bacillus mycoides (strain KBAB4) (Bacillus weihenstephanensis).